Here is a 145-residue protein sequence, read N- to C-terminus: D-aminoacyl-tRNA deacylase (145 aa).

The Gly-cisPro motif, important for rejection of L-amino acids motif lies at 137–138 (GP).

It belongs to the DTD family. Homodimer.

It is found in the cytoplasm. The catalysed reaction is glycyl-tRNA(Ala) + H2O = tRNA(Ala) + glycine + H(+). The enzyme catalyses a D-aminoacyl-tRNA + H2O = a tRNA + a D-alpha-amino acid + H(+). An aminoacyl-tRNA editing enzyme that deacylates mischarged D-aminoacyl-tRNAs. Also deacylates mischarged glycyl-tRNA(Ala), protecting cells against glycine mischarging by AlaRS. Acts via tRNA-based rather than protein-based catalysis; rejects L-amino acids rather than detecting D-amino acids in the active site. By recycling D-aminoacyl-tRNA to D-amino acids and free tRNA molecules, this enzyme counteracts the toxicity associated with the formation of D-aminoacyl-tRNA entities in vivo and helps enforce protein L-homochirality. This Shewanella baltica (strain OS223) protein is D-aminoacyl-tRNA deacylase.